Here is a 395-residue protein sequence, read N- to C-terminus: MQSMVILGATGSIGASTLSVIASNPETYSVYALVANTNVDKMMALCEQYRPKVAHMVDEQAAKSLQERLSPSLKIEVTTGESQLESIVTSSCVDTVMAAIVGAAGLVPTLAAVKAGKRVLLANKESLVMSGRLFIEEMKKSGAQVLPVDSEHNAIFQALPEPVQQEIGFCDLDEAGISHILLTGSGGPFLTSPLSSLPQMTPAQACKHPNWSMGRKISVDSASMMNKGLEYIEARWLFNASAEQLKVVIHPQSVIHSMVQYRDGSVIAQLGNPDMRTPIAHCMSYPQRINSGVEPLDFFKVGQLSFLEPDFTRFPCLALAIDACNQGQEATTILNAANEISVAAFLDNKIKFTDIAKVNETCLSQVAKQALNSIDDILALDVQTRTYASEWVNKI.

Residues Thr-10, Gly-11, Ser-12, Ile-13, Asn-38, and Asn-123 each coordinate NADPH. Lys-124 is a 1-deoxy-D-xylulose 5-phosphate binding site. Residue Glu-125 coordinates NADPH. Asp-149 is a Mn(2+) binding site. 1-deoxy-D-xylulose 5-phosphate-binding residues include Ser-150, Glu-151, Ser-185, and His-208. Glu-151 lines the Mn(2+) pocket. An NADPH-binding site is contributed by Gly-214. Residues Ser-221, Asn-226, Lys-227, and Glu-230 each coordinate 1-deoxy-D-xylulose 5-phosphate. Residue Glu-230 participates in Mn(2+) binding.

This sequence belongs to the DXR family. Mg(2+) is required as a cofactor. The cofactor is Mn(2+).

It catalyses the reaction 2-C-methyl-D-erythritol 4-phosphate + NADP(+) = 1-deoxy-D-xylulose 5-phosphate + NADPH + H(+). The protein operates within isoprenoid biosynthesis; isopentenyl diphosphate biosynthesis via DXP pathway; isopentenyl diphosphate from 1-deoxy-D-xylulose 5-phosphate: step 1/6. In terms of biological role, catalyzes the NADPH-dependent rearrangement and reduction of 1-deoxy-D-xylulose-5-phosphate (DXP) to 2-C-methyl-D-erythritol 4-phosphate (MEP). The protein is 1-deoxy-D-xylulose 5-phosphate reductoisomerase of Shewanella woodyi (strain ATCC 51908 / MS32).